Consider the following 229-residue polypeptide: MIDHAHLRLFQFCDSQFPTGAFSHSFGLETYIQRDTVHDEESFQQWLVLFLNEQLTYADGLTMRLVYDALNENDTKAILKLDRILFVQNLPKETRQGSKQMGNRMVKLASELYDSDWINWYHAQMKDKKASLHPAICFTMLGHHLGVDIETIIDYYLYQNVSSLTQNAVRAIPLGQTAGQRIVHKMIPIMKETRDHIMTIPASQLGITAPGLEINQMEHENVNVRIFIS.

The protein belongs to the UreF family. In terms of assembly, ureD, UreF and UreG form a complex that acts as a GTP-hydrolysis-dependent molecular chaperone, activating the urease apoprotein by helping to assemble the nickel containing metallocenter of UreC. The UreE protein probably delivers the nickel.

It is found in the cytoplasm. Its function is as follows. Required for maturation of urease via the functional incorporation of the urease nickel metallocenter. This chain is Urease accessory protein UreF, found in Staphylococcus saprophyticus subsp. saprophyticus (strain ATCC 15305 / DSM 20229 / NCIMB 8711 / NCTC 7292 / S-41).